A 426-amino-acid chain; its full sequence is UDP-N-acetylglucosamine 1-carboxyvinyltransferase 2 (426 aa).

22–23 provides a ligand contact to phosphoenolpyruvate; sequence KN. R92 is a UDP-N-acetyl-alpha-D-glucosamine binding site. D116 functions as the Proton donor in the catalytic mechanism. Residues 121–125, D307, and I329 contribute to the UDP-N-acetyl-alpha-D-glucosamine site; that span reads RPIDQ.

The protein belongs to the EPSP synthase family. MurA subfamily.

It is found in the cytoplasm. It catalyses the reaction phosphoenolpyruvate + UDP-N-acetyl-alpha-D-glucosamine = UDP-N-acetyl-3-O-(1-carboxyvinyl)-alpha-D-glucosamine + phosphate. Its pathway is cell wall biogenesis; peptidoglycan biosynthesis. Its function is as follows. Cell wall formation. Adds enolpyruvyl to UDP-N-acetylglucosamine. The sequence is that of UDP-N-acetylglucosamine 1-carboxyvinyltransferase 2 from Lactiplantibacillus plantarum (strain ATCC BAA-793 / NCIMB 8826 / WCFS1) (Lactobacillus plantarum).